A 334-amino-acid polypeptide reads, in one-letter code: N-acetylmuramoyl-L-alanine amidase sle1 (334 aa).

Residues 1-25 (MQKKVIAAIIGTSAISAVAATQANA) form the signal peptide. A LysM 1 domain is found at 27-70 (TTHTVKPGESVWAISNKYGISIAKLKSLNNLTSNLIFPNQVLKV). Positions 71 to 86 (SGSSNSTSNSSRPSTN) are enriched in low complexity. The disordered stretch occupies residues 71-90 (SGSSNSTSNSSRPSTNSGGG). LysM domains lie at 91–134 (SYYT…KLKV) and 158–201 (SYYT…KLKV). A Peptidase C51 domain is found at 210–334 (GSATTTNRGY…YQVNNYRYIH (125 aa)).

It localises to the secreted. It is found in the cell surface. The catalysed reaction is Hydrolyzes the link between N-acetylmuramoyl residues and L-amino acid residues in certain cell-wall glycopeptides.. Its function is as follows. Peptidoglycan hydrolase involved in the splitting of the septum during cell division. The polypeptide is N-acetylmuramoyl-L-alanine amidase sle1 (sle1) (Staphylococcus aureus (strain USA300)).